The primary structure comprises 87 residues: Small ribosomal subunit protein uS17 (87 aa).

This sequence belongs to the universal ribosomal protein uS17 family. Part of the 30S ribosomal subunit.

One of the primary rRNA binding proteins, it binds specifically to the 5'-end of 16S ribosomal RNA. This chain is Small ribosomal subunit protein uS17, found in Neisseria gonorrhoeae (strain ATCC 700825 / FA 1090).